Consider the following 176-residue polypeptide: Adenine phosphoribosyltransferase (176 aa).

It belongs to the purine/pyrimidine phosphoribosyltransferase family. As to quaternary structure, homodimer.

The protein resides in the cytoplasm. It carries out the reaction AMP + diphosphate = 5-phospho-alpha-D-ribose 1-diphosphate + adenine. It functions in the pathway purine metabolism; AMP biosynthesis via salvage pathway; AMP from adenine: step 1/1. Functionally, catalyzes a salvage reaction resulting in the formation of AMP, that is energically less costly than de novo synthesis. This chain is Adenine phosphoribosyltransferase, found in Borreliella afzelii (strain PKo) (Borrelia afzelii).